We begin with the raw amino-acid sequence, 180 residues long: MLEQNIKKVLYSEEEIIVKTKELGAQLTKDYAGKNPLLVGVLKGSVPFMAELMKHIDTHIEIDFMVVSSYHGGTTSSGEVKILKDVDTNIENRDVIFIEDIIDTGRTLKYLRDMFKYRQANSVRIATLFDKPEGRVVDIDADYVCYKVPNEFIVGFGLDYAENYRNLPYVGVLKEDVYSK.

Diphosphate is bound by residues Lys-43 and Gly-44. Mg(2+) contacts are provided by Glu-99 and Asp-100. Asp-103 acts as the Proton acceptor in catalysis. GMP-binding positions include Lys-131, 152–153 (FI), and Asp-159. Position 165 (Arg-165) interacts with diphosphate.

This sequence belongs to the purine/pyrimidine phosphoribosyltransferase family. Requires Mg(2+) as cofactor.

Its subcellular location is the cytoplasm. It catalyses the reaction IMP + diphosphate = hypoxanthine + 5-phospho-alpha-D-ribose 1-diphosphate. The catalysed reaction is GMP + diphosphate = guanine + 5-phospho-alpha-D-ribose 1-diphosphate. The protein operates within purine metabolism; IMP biosynthesis via salvage pathway; IMP from hypoxanthine: step 1/1. It functions in the pathway purine metabolism; GMP biosynthesis via salvage pathway; GMP from guanine: step 1/1. Purine salvage pathway enzyme that catalyzes the transfer of the ribosyl-5-phosphate group from 5-phospho-alpha-D-ribose 1-diphosphate (PRPP) to the N9 position of the 6-oxopurines hypoxanthine and guanine to form the corresponding ribonucleotides IMP (inosine 5'-monophosphate) and GMP (guanosine 5'-monophosphate), with the release of PPi. The chain is Hypoxanthine-guanine phosphoribosyltransferase (hpt) from Streptococcus mutans serotype c (strain ATCC 700610 / UA159).